Here is a 768-residue protein sequence, read N- to C-terminus: Calcium up-regulated protein G (768 aa).

The tract at residues 1–22 (MINIEDISKSSNQSEEKQLKST) is disordered. 2 consecutive Ricin B-type lectin domains span residues 1-107 (MINI…WTID) and 100-248 (KTQI…WGIN).

Belongs to the cup family.

The protein resides in the cytoplasm. It is found in the membrane. Functionally, may play an important role in stabilizing and/or regulating the cell membrane during Ca(2+) stress or certain stages of development. The polypeptide is Calcium up-regulated protein G (cupG) (Dictyostelium discoideum (Social amoeba)).